Reading from the N-terminus, the 179-residue chain is Large ribosomal subunit protein uL5 (179 aa).

It belongs to the universal ribosomal protein uL5 family. Part of the 50S ribosomal subunit; part of the 5S rRNA/L5/L18/L25 subcomplex. Contacts the 5S rRNA and the P site tRNA. Forms a bridge to the 30S subunit in the 70S ribosome.

Its function is as follows. This is one of the proteins that bind and probably mediate the attachment of the 5S RNA into the large ribosomal subunit, where it forms part of the central protuberance. In the 70S ribosome it contacts protein S13 of the 30S subunit (bridge B1b), connecting the 2 subunits; this bridge is implicated in subunit movement. Contacts the P site tRNA; the 5S rRNA and some of its associated proteins might help stabilize positioning of ribosome-bound tRNAs. The polypeptide is Large ribosomal subunit protein uL5 (Bacillus mycoides (strain KBAB4) (Bacillus weihenstephanensis)).